The following is a 598-amino-acid chain: Nuclear receptor subfamily 4 group A member 2 (598 aa).

Residues 1 to 22 (MPCVQAQYGSSPQGASPASQSY) form a disordered region. A compositionally biased stretch (low complexity) spans 8–22 (YGSSPQGASPASQSY). A DNA-binding region (nuclear receptor) is located at residues 260 to 335 (EGLCAVCGDN…VGMVKEVVRT (76 aa)). 2 consecutive NR C4-type zinc fingers follow at residues 263-283 (CAVC…CEGC) and 299-323 (CLAN…FQKC). The Bipartite nuclear localization signal (NLS1) motif lies at 287–314 (FKRTVQKNAKYVCLANKNCPVDKRRRNR). Residues 337–361 (SLKGRRGRLPSKPKSPQDPSPPSPP) are disordered. Positions 338-350 (LKGRRGRLPSKPK) match the Nuclear localization signal (NLS1) motif. Pro residues predominate over residues 352-361 (PQDPSPPSPP). Positions 360-595 (PPVSLISALV…AIIDKLFLDT (236 aa)) constitute an NR LBD domain. The nuclear export sequence (NES1) signature appears at 443-452 (FLELFVLRLA). Positions 568 to 577 (QGLQRIFYLK) match the nuclear export sequence (NES2) motif.

Belongs to the nuclear hormone receptor family. NR4 subfamily. In terms of assembly, interacts with SFPQ, NCOR2, SIN3A and HADC1. The interaction with NCOR2 increases in the absence of PITX3. Interacts with PER2. As to expression, brain.

The protein resides in the cytoplasm. It is found in the nucleus. Functionally, transcriptional regulator which is important for the differentiation and maintenance of meso-diencephalic dopaminergic (mdDA) neurons during development. It is crucial for expression of a set of genes such as SLC6A3, SLC18A2, TH and DRD2 which are essential for development of mdDA neurons. The chain is Nuclear receptor subfamily 4 group A member 2 (Nr4a2) from Mus musculus (Mouse).